Reading from the N-terminus, the 199-residue chain is Proteasome subunit beta 2 (199 aa).

The propeptide at 1 to 6 is removed in mature form; by autocatalysis; the sequence is MEKKTG. The active-site Nucleophile is the Thr7.

The protein belongs to the peptidase T1B family. As to quaternary structure, the 20S proteasome core is composed of 14 alpha and 14 beta subunits that assemble into four stacked heptameric rings, resulting in a barrel-shaped structure. The two inner rings, each composed of seven catalytic beta subunits, are sandwiched by two outer rings, each composed of seven alpha subunits. The catalytic chamber with the active sites is on the inside of the barrel. Has a gated structure, the ends of the cylinder being occluded by the N-termini of the alpha-subunits. Is capped at one or both ends by the proteasome regulatory ATPase, PAN.

The protein localises to the cytoplasm. It carries out the reaction Cleavage of peptide bonds with very broad specificity.. Its activity is regulated as follows. The formation of the proteasomal ATPase PAN-20S proteasome complex, via the docking of the C-termini of PAN into the intersubunit pockets in the alpha-rings, triggers opening of the gate for substrate entry. Interconversion between the open-gate and close-gate conformations leads to a dynamic regulation of the 20S proteasome proteolysis activity. Functionally, component of the proteasome core, a large protease complex with broad specificity involved in protein degradation. This chain is Proteasome subunit beta 2, found in Thermococcus kodakarensis (strain ATCC BAA-918 / JCM 12380 / KOD1) (Pyrococcus kodakaraensis (strain KOD1)).